Consider the following 801-residue polypeptide: Na(+)/H(+) antiporter subunit A1 (801 aa).

Helical transmembrane passes span 1–21, 28–48, 79–99, 117–137, 166–186, 206–226, 265–285, 300–320, 337–357, 373–393, 427–447, 472–492, 522–542, 591–611, 623–643, 646–666, 671–691, 707–727, and 764–784; these read MSLLHIAVILPLIFVLIIPIL, IHLGWFVLPVPIVIFIYMLTL, LGLLFSLLISGIGSLVVLYSI, LFMGAMLGVVLSDNVIILYLF, LIITVFGGLSLLGGIILLAIP, PFFIFAMILIMIGAFTKSAQF, IFAASQGWIWTVTLVGLITLF, ILAFSTVSQLGMIMAMLGIGA, FTAAIFHLINHATFKGALFMI, LGGLLTIMPISFTITVITALS, LGYLFPIIGIVGSVFTFVYSI, ILMLLSPAILATLVIVFGLFP, GLTPAFLSTLVIYILGILLIV, LVIIFGALILLTFVTVFSVPF, IFEVCIVILLLSAAFLILFAK, LFNIIMLSAVGYAVSVLFIFF, LALTQFVVESISTALFLLCFY, LTNALIAGGVGLSVIIIGLIA, and MDTLFESSVLGIAGLAVYTMI.

This sequence belongs to the CPA3 antiporters (TC 2.A.63) subunit A family. May form a heterooligomeric complex that consists of seven subunits: mnhA1, mnhB1, mnhC1, mnhD1, mnhE1, mnhF1 and mnhG1.

The protein localises to the cell membrane. Mnh complex is a Na(+)/H(+) antiporter involved in Na(+) excretion. The chain is Na(+)/H(+) antiporter subunit A1 (mnhA1) from Staphylococcus aureus (strain bovine RF122 / ET3-1).